We begin with the raw amino-acid sequence, 195 residues long: MALVPMVVEQTNRGERSYDIYSRLLKERIIFLSDEVNDATASLVVAQLLFLESEDPDKDIQLYINSPGGSITAGMAIYDTMNYIKPDVSTICIGMAASMGAFLLTAGQKGKRFALPNAEIMIHQPLGGTRGQAEDIRIHTERILKMRETLNKIIAERTGQPLEKVQKDTDRDFFMEAEEARAYGIIDEVITTAKK.

The active-site Nucleophile is serine 98. Histidine 123 is a catalytic residue.

The protein belongs to the peptidase S14 family. Fourteen ClpP subunits assemble into 2 heptameric rings which stack back to back to give a disk-like structure with a central cavity, resembling the structure of eukaryotic proteasomes.

It localises to the cytoplasm. It carries out the reaction Hydrolysis of proteins to small peptides in the presence of ATP and magnesium. alpha-casein is the usual test substrate. In the absence of ATP, only oligopeptides shorter than five residues are hydrolyzed (such as succinyl-Leu-Tyr-|-NHMec, and Leu-Tyr-Leu-|-Tyr-Trp, in which cleavage of the -Tyr-|-Leu- and -Tyr-|-Trp bonds also occurs).. Functionally, cleaves peptides in various proteins in a process that requires ATP hydrolysis. Has a chymotrypsin-like activity. Plays a major role in the degradation of misfolded proteins. This Alkaliphilus oremlandii (strain OhILAs) (Clostridium oremlandii (strain OhILAs)) protein is ATP-dependent Clp protease proteolytic subunit.